A 470-amino-acid chain; its full sequence is Zinc finger protein pat-9 (470 aa).

The tract at residues 1-25 is disordered; it reads MENRTPMQHHSGYEIVKSEPPSTPK. 3 consecutive C2H2-type zinc fingers follow at residues 84-106, 112-134, and 140-162; these read YPCNLCSSKFGSKMELEEHQNSH, FECDTCNARFNRRSTLWNHKRIH, and FVCTVCQMTFKWKNSLKCHKDMH. Residues 191–235 form a disordered region; it reads MEQEENGGLPASSSASSVISHPLITTTSGNKKRSKAAKAKQTPSS. The Nuclear localization signal motif lies at 221–230; the sequence is KKRSKAAKAK.

This sequence belongs to the krueppel C2H2-type zinc-finger protein family. Expressed in body wall muscle and gonad (at protein level).

The protein resides in the nucleus. It is found in the chromosome. In terms of biological role, probable transcription factor; required for proper organization of muscle myofilaments and for their recruitment to the M line. The protein is Zinc finger protein pat-9 of Caenorhabditis elegans.